A 908-amino-acid chain; its full sequence is MLGLGTLARKIFGTPNDRKVKSVRSLVARINDLEPEFQALSDEGIKQKTAEFQRRVQEGGESLDDLLPEAFANCREGARRALGLRAFDVQLMGGIFLHQGNIAEMKTGEGKTLVATFPAYLNALAGKGVHVVTVNDYLAKRDAEWMGKVYAQLGLATGVVYPFQSDEEKKAAYAADITYATNNELGFDYLRDNMKASKEEMRQRGHFFAIVDEVDSILIDEARTPLIISGPSQDRSDLYTKVDKLIPELVEEHYKLDEKTRNVTFTEEGNEFLEKRLLETGLLPEGQSLYDPESTTIVHHVNQGLRAHKLFNRDQQYIVRDDEIMLIDEFTGRMMRGRRLSDGLHQAIEAKEGVSIQPENVTLASVTFQNYFRLYEKLGGMTGTAATEAEEFMEIYGLGVVEVPTNRPVARADEHDAVYRTAREKHDGIVASIKDAHERGQPILVGTTSIDKSEALSDLLKAAGIPHNVLNARQHEQEAQIVADAGKLGAVTIATNMAGRGTDIQLGGNVEMKVMQALAADPTAHPDEVRARIEAEHAEEKERVKEAGGLFVLGTERHESRRIDNQLRGRSGRQGDPGRSAFFLSLEDDLMRIFGSDRLDKVLSTLGMKEGEAIVHPWVNKSLEKAQAKVEARNFDIRKQLLKFDDVMNDQRKAIFSQRLEIMETEDLSEIAQDMRYQVIDDLIDQHMPPRSYADQWDIEGMHRAVQDKLGLDAPLAKWAQEEGVDLDVVRERLCEASDRQMTEKAEAFGPETMRSIEKQILLQTIDAKWREHLLTLEHLRSVVGFRGYAQRDPLSEYKTEAFALFESMLNSLRQDVTQKLAQVRPLSEEEQQAMMRQFLDQQRAAAAAEAPVAPAPQPAAAAPQPTPELVGAEAGEPDPAAWGNVARNDPCPCGSGLKYKHCHGRLD.

ATP is bound by residues glutamine 90, 108-112, and aspartate 503; that span reads GEGKT. The segment covering 846–864 has biased composition (low complexity); that stretch reads AAAAEAPVAPAPQPAAAAP. The segment at 846–884 is disordered; that stretch reads AAAAEAPVAPAPQPAAAAPQPTPELVGAEAGEPDPAAWG. 4 residues coordinate Zn(2+): cysteine 892, cysteine 894, cysteine 903, and histidine 904.

This sequence belongs to the SecA family. In terms of assembly, monomer and homodimer. Part of the essential Sec protein translocation apparatus which comprises SecA, SecYEG and auxiliary proteins SecDF-YajC and YidC. Requires Zn(2+) as cofactor.

The protein resides in the cell inner membrane. It is found in the cytoplasm. It carries out the reaction ATP + H2O + cellular proteinSide 1 = ADP + phosphate + cellular proteinSide 2.. Part of the Sec protein translocase complex. Interacts with the SecYEG preprotein conducting channel. Has a central role in coupling the hydrolysis of ATP to the transfer of proteins into and across the cell membrane, serving both as a receptor for the preprotein-SecB complex and as an ATP-driven molecular motor driving the stepwise translocation of polypeptide chains across the membrane. This is Protein translocase subunit SecA from Cereibacter sphaeroides (strain ATCC 17029 / ATH 2.4.9) (Rhodobacter sphaeroides).